The primary structure comprises 212 residues: Deoxyribose-phosphate aldolase (212 aa).

The Proton donor/acceptor role is filled by Asp89. Catalysis depends on Lys151, which acts as the Schiff-base intermediate with acetaldehyde. The active-site Proton donor/acceptor is Lys180.

It belongs to the DeoC/FbaB aldolase family. DeoC type 1 subfamily.

Its subcellular location is the cytoplasm. The enzyme catalyses 2-deoxy-D-ribose 5-phosphate = D-glyceraldehyde 3-phosphate + acetaldehyde. It functions in the pathway carbohydrate degradation; 2-deoxy-D-ribose 1-phosphate degradation; D-glyceraldehyde 3-phosphate and acetaldehyde from 2-deoxy-alpha-D-ribose 1-phosphate: step 2/2. In terms of biological role, catalyzes a reversible aldol reaction between acetaldehyde and D-glyceraldehyde 3-phosphate to generate 2-deoxy-D-ribose 5-phosphate. The polypeptide is Deoxyribose-phosphate aldolase (Clostridium botulinum (strain Okra / Type B1)).